We begin with the raw amino-acid sequence, 366 residues long: Chorismate synthase (366 aa).

Arg-48 serves as a coordination point for NADP(+). Residues 125-127 (RSS), 241-242 (NA), Gly-285, 300-304 (KPTSS), and Arg-326 contribute to the FMN site.

This sequence belongs to the chorismate synthase family. As to quaternary structure, homotetramer. The cofactor is FMNH2.

The catalysed reaction is 5-O-(1-carboxyvinyl)-3-phosphoshikimate = chorismate + phosphate. It functions in the pathway metabolic intermediate biosynthesis; chorismate biosynthesis; chorismate from D-erythrose 4-phosphate and phosphoenolpyruvate: step 7/7. Its function is as follows. Catalyzes the anti-1,4-elimination of the C-3 phosphate and the C-6 proR hydrogen from 5-enolpyruvylshikimate-3-phosphate (EPSP) to yield chorismate, which is the branch point compound that serves as the starting substrate for the three terminal pathways of aromatic amino acid biosynthesis. This reaction introduces a second double bond into the aromatic ring system. The sequence is that of Chorismate synthase from Ruegeria pomeroyi (strain ATCC 700808 / DSM 15171 / DSS-3) (Silicibacter pomeroyi).